The sequence spans 417 residues: Serine hydroxymethyltransferase (417 aa).

(6S)-5,6,7,8-tetrahydrofolate contacts are provided by residues Leu121 and 125-127 (GHL). Lys229 is modified (N6-(pyridoxal phosphate)lysine). 355-357 (SPF) is a (6S)-5,6,7,8-tetrahydrofolate binding site.

The protein belongs to the SHMT family. As to quaternary structure, homodimer. Pyridoxal 5'-phosphate serves as cofactor.

It localises to the cytoplasm. The catalysed reaction is (6R)-5,10-methylene-5,6,7,8-tetrahydrofolate + glycine + H2O = (6S)-5,6,7,8-tetrahydrofolate + L-serine. It participates in one-carbon metabolism; tetrahydrofolate interconversion. Its pathway is amino-acid biosynthesis; glycine biosynthesis; glycine from L-serine: step 1/1. Catalyzes the reversible interconversion of serine and glycine with tetrahydrofolate (THF) serving as the one-carbon carrier. This reaction serves as the major source of one-carbon groups required for the biosynthesis of purines, thymidylate, methionine, and other important biomolecules. Also exhibits THF-independent aldolase activity toward beta-hydroxyamino acids, producing glycine and aldehydes, via a retro-aldol mechanism. The sequence is that of Serine hydroxymethyltransferase from Klebsiella pneumoniae (strain 342).